Here is a 381-residue protein sequence, read N- to C-terminus: Sulfite reductase, dissimilatory-type subunit beta (381 aa).

[4Fe-4S] cluster-binding residues include C151, C188, C189, C193, C231, C258, C261, and C264. C193 contacts siroheme. In terms of domain architecture, 4Fe-4S ferredoxin-type spans 249–276 (NTIAIKNERCMYCGNCYTMCPALPISDG).

Heterohexamer of two alpha, two beta and two gamma subunits. Requires [4Fe-4S] cluster as cofactor. It depends on siroheme as a cofactor.

It catalyses the reaction [DsrC protein]-trisulfide + NAD(+) + 3 H2O = [DsrC protein]-dithiol + sulfite + NADH + 3 H(+). Catalyzes the reduction of sulfite to sulfide. This is the terminal oxidation reaction in sulfate respiration, a process catalyzed by the sulfate-reducing bacteria. This Nitratidesulfovibrio vulgaris (strain ATCC 29579 / DSM 644 / CCUG 34227 / NCIMB 8303 / VKM B-1760 / Hildenborough) (Desulfovibrio vulgaris) protein is Sulfite reductase, dissimilatory-type subunit beta (dsvB).